A 1295-amino-acid chain; its full sequence is DNA-directed RNA polymerase subunit beta' (1295 aa).

The Zn(2+) site is built by cysteine 60, cysteine 62, cysteine 75, and cysteine 78. Aspartate 516, aspartate 518, and aspartate 520 together coordinate Mg(2+). Zn(2+) contacts are provided by cysteine 841, cysteine 914, cysteine 921, and cysteine 924.

It belongs to the RNA polymerase beta' chain family. In terms of assembly, the RNAP catalytic core consists of 2 alpha, 1 beta, 1 beta' and 1 omega subunit. When a sigma factor is associated with the core the holoenzyme is formed, which can initiate transcription. Requires Mg(2+) as cofactor. Zn(2+) serves as cofactor.

It catalyses the reaction RNA(n) + a ribonucleoside 5'-triphosphate = RNA(n+1) + diphosphate. Its function is as follows. DNA-dependent RNA polymerase catalyzes the transcription of DNA into RNA using the four ribonucleoside triphosphates as substrates. The sequence is that of DNA-directed RNA polymerase subunit beta' from Dehalococcoides mccartyi (strain ATCC BAA-2100 / JCM 16839 / KCTC 5957 / BAV1).